Consider the following 44-residue polypeptide: GHVSCGKDGRACDYHADCCNCCLGGICKPSTSWIGCSTNVFLTR.

4 disulfides stabilise this stretch: Cys-5/Cys-19, Cys-12/Cys-22, Cys-18/Cys-27, and Cys-21/Cys-36. Arg-44 is a propeptide (removed by a carboxypeptidase).

This sequence belongs to the conotoxin I1 superfamily. Expressed by the venom duct.

The protein localises to the secreted. Functionally, iota-conotoxins bind to voltage-gated sodium channels (Nav) and act as agonists by shifting the voltage-dependence of activation to more hyperpolarized levels. Produces general excitatory symptoms. In Conus radiatus (Rayed cone), this protein is Iota-conotoxin-like R11.11.